Consider the following 116-residue polypeptide: Large ribosomal subunit protein bL20 (116 aa).

It belongs to the bacterial ribosomal protein bL20 family.

Functionally, binds directly to 23S ribosomal RNA and is necessary for the in vitro assembly process of the 50S ribosomal subunit. It is not involved in the protein synthesizing functions of that subunit. In Helicobacter pylori (strain ATCC 700392 / 26695) (Campylobacter pylori), this protein is Large ribosomal subunit protein bL20 (rplT).